We begin with the raw amino-acid sequence, 60 residues long: Cytotoxin 4 (60 aa).

Disulfide bonds link Cys3/Cys21, Cys14/Cys38, Cys42/Cys53, and Cys54/Cys59.

The protein belongs to the three-finger toxin family. Short-chain subfamily. Type IA cytotoxin sub-subfamily. Monomer in solution; Homodimer and oligomer in the presence of negatively charged lipids forming a pore with a size ranging between 20 and 30 Angstroms. In terms of tissue distribution, expressed by the venom gland.

It localises to the secreted. The protein resides in the target cell membrane. In terms of biological role, shows cytolytic activity on many different cells by forming pore in lipid membranes. In vivo, increases heart rate or kills the animal by cardiac arrest. In addition, it binds to heparin with high affinity, interacts with Kv channel-interacting protein 1 (KCNIP1) in a calcium-independent manner, and binds to integrin alpha-V/beta-3 (ITGAV/ITGB3) with moderate affinity. This chain is Cytotoxin 4, found in Naja annulifera (Banded Egyptian cobra).